A 228-amino-acid polypeptide reads, in one-letter code: Protein-L-isoaspartate O-methyltransferase (228 aa).

Ser74 is an active-site residue.

This sequence belongs to the methyltransferase superfamily. L-isoaspartyl/D-aspartyl protein methyltransferase family.

It is found in the cytoplasm. The catalysed reaction is [protein]-L-isoaspartate + S-adenosyl-L-methionine = [protein]-L-isoaspartate alpha-methyl ester + S-adenosyl-L-homocysteine. Catalyzes the methyl esterification of L-isoaspartyl residues in peptides and proteins that result from spontaneous decomposition of normal L-aspartyl and L-asparaginyl residues. It plays a role in the repair and/or degradation of damaged proteins. The chain is Protein-L-isoaspartate O-methyltransferase from Methylorubrum extorquens (strain PA1) (Methylobacterium extorquens).